The primary structure comprises 290 residues: Fat storage-inducing transmembrane protein 1 (290 aa).

Transmembrane regions (helical) follow at residues 1 to 21 (MFLN…LGNT), 26 to 46 (HFHL…LWVS), 65 to 85 (SGWG…SFSV), 173 to 193 (LLLC…GPYL), and 205 to 225 (ILFL…LCLL).

It belongs to the FIT family. FIT1 subfamily.

It localises to the endoplasmic reticulum membrane. Its function is as follows. May play an important role in the formation of lipid droplets (LDs) which are storage organelles at the center of lipid and energy homeostasis. May directly bind to diacylglycerol (DAGs) and triacylglycerol. The protein is Fat storage-inducing transmembrane protein 1 (fitm1l) of Danio rerio (Zebrafish).